The sequence spans 112 residues: Thioredoxin (112 aa).

The Thioredoxin domain maps to 2 to 112 (SEDSATVAVT…ALLRELSDAL (111 aa)). The cysteines at positions 35 and 38 are disulfide-linked.

This sequence belongs to the thioredoxin family.

Functionally, participates in various redox reactions through the reversible oxidation of its active center dithiol to a disulfide and catalyzes dithiol-disulfide exchange reactions. This is Thioredoxin (trxA) from Mycolicibacterium smegmatis (Mycobacterium smegmatis).